A 359-amino-acid chain; its full sequence is 2-epi-5-epi-valiolone 7-kinase (359 aa).

The tract at residues 28–48 (GGLGEVHTTPSPGHARRPGAG) is disordered.

This sequence belongs to the ROK (NagC/XylR) family.

The enzyme catalyses 2-epi-5-epi-valiolone + ATP = 2-epi-5-epi-valiolone 7-phosphate + ADP + H(+). Its function is as follows. Catalyzes the conversion of 2-epi-5-epi-valiolone to 2-epi-5-epi-valiolone 7-phosphate. Involved in the biosynthesis of the acarviose moiety of the alpha-glucosidase inhibitor acarbose. This Actinoplanes sp. (strain ATCC 31044 / CBS 674.73 / SE50/110) protein is 2-epi-5-epi-valiolone 7-kinase.